The chain runs to 368 residues: Probable dual-specificity RNA methyltransferase RlmN (368 aa).

Catalysis depends on Glu-109, which acts as the Proton acceptor. The Radical SAM core domain occupies 115-355 (YPDRVTMCIS…VTIRDTRGQE (241 aa)). Cys-122 and Cys-360 are oxidised to a cystine. Positions 129, 133, and 136 each coordinate [4Fe-4S] cluster. Residues 184–185 (GE), Ser-218, 241–243 (SLH), and Asn-317 each bind S-adenosyl-L-methionine. Cys-360 serves as the catalytic S-methylcysteine intermediate.

The protein belongs to the radical SAM superfamily. RlmN family. It depends on [4Fe-4S] cluster as a cofactor.

It localises to the cytoplasm. It carries out the reaction adenosine(2503) in 23S rRNA + 2 reduced [2Fe-2S]-[ferredoxin] + 2 S-adenosyl-L-methionine = 2-methyladenosine(2503) in 23S rRNA + 5'-deoxyadenosine + L-methionine + 2 oxidized [2Fe-2S]-[ferredoxin] + S-adenosyl-L-homocysteine. The catalysed reaction is adenosine(37) in tRNA + 2 reduced [2Fe-2S]-[ferredoxin] + 2 S-adenosyl-L-methionine = 2-methyladenosine(37) in tRNA + 5'-deoxyadenosine + L-methionine + 2 oxidized [2Fe-2S]-[ferredoxin] + S-adenosyl-L-homocysteine. Specifically methylates position 2 of adenine 2503 in 23S rRNA and position 2 of adenine 37 in tRNAs. This chain is Probable dual-specificity RNA methyltransferase RlmN, found in Streptomyces coelicolor (strain ATCC BAA-471 / A3(2) / M145).